The following is a 1077-amino-acid chain: ATP-dependent DNA helicase MPH1 (1077 aa).

Residues 99-266 (IVHRALFENV…EVVDNLQISK (168 aa)) form the Helicase ATP-binding domain. 112–119 (IPTGMGKT) is an ATP binding site. The DEAH box signature appears at 214–217 (DEAH). The 150-residue stretch at 511 to 660 (KKVDRIRRLE…SLNYKVTDRI (150 aa)) folds into the Helicase C-terminal domain. Disordered stretches follow at residues 536 to 556 (EKLA…ISGM) and 831 to 859 (TLSS…PKRQ). The segment covering 831 to 841 (TLSSDNKSTPD) has biased composition (polar residues).

This sequence belongs to the DEAD box helicase family. DEAH subfamily. FANCM sub-subfamily. In terms of assembly, interacts with the MHF histone-fold complex to form the FANCM-MHF complex.

The protein localises to the nucleus. The enzyme catalyses ATP + H2O = ADP + phosphate + H(+). ATP-dependent DNA helicase involved in DNA damage repair by homologous recombination and in genome maintenance. Capable of unwinding D-loops. Plays a role in limiting crossover recombinants during mitotic DNA double-strand break (DSB) repair. Component of a FANCM-MHF complex which promotes gene conversion at blocked replication forks, probably by reversal of the stalled fork. This chain is ATP-dependent DNA helicase MPH1, found in Eremothecium gossypii (strain ATCC 10895 / CBS 109.51 / FGSC 9923 / NRRL Y-1056) (Yeast).